The following is a 186-amino-acid chain: Bis(5'-nucleosyl)-tetraphosphatase, symmetrical (186 aa).

The HD domain occupies 18-132 (RYIHTVGVMN…IYVADYIEPN (115 aa)). His21 lines the ADP pocket. Residues His21, His50, and Asp51 each coordinate Fe cation. ADP is bound by residues 51–54 (DYAK), His83, 109–110 (HT), Asp127, Arg133, and 170–175 (PVFPDT). Position 127 (Asp127) interacts with Fe cation.

This sequence belongs to the Ap4A hydrolase YqeK family. Homodimer.

The enzyme catalyses P(1),P(4)-bis(5'-adenosyl) tetraphosphate + H2O = 2 ADP + 2 H(+). Its function is as follows. Hydrolyzes diadenosine 5',5'''-P1,P4-tetraphosphate (Ap4A) to yield ADP. The protein is Bis(5'-nucleosyl)-tetraphosphatase, symmetrical (yqeK) of Bacillus subtilis (strain 168).